Reading from the N-terminus, the 352-residue chain is Histidinol-phosphate aminotransferase 1 (352 aa).

The residue at position 211 (lysine 211) is an N6-(pyridoxal phosphate)lysine.

The protein belongs to the class-II pyridoxal-phosphate-dependent aminotransferase family. Histidinol-phosphate aminotransferase subfamily. As to quaternary structure, homodimer. Requires pyridoxal 5'-phosphate as cofactor.

It carries out the reaction L-histidinol phosphate + 2-oxoglutarate = 3-(imidazol-4-yl)-2-oxopropyl phosphate + L-glutamate. Its pathway is amino-acid biosynthesis; L-histidine biosynthesis; L-histidine from 5-phospho-alpha-D-ribose 1-diphosphate: step 7/9. This Haemophilus influenzae (strain 86-028NP) protein is Histidinol-phosphate aminotransferase 1.